A 213-amino-acid chain; its full sequence is Small ribosomal subunit protein uS5 (213 aa).

Residues 1–41 (MSGRERNGGRSAENNDKKERNERNGRNDRGGRNDRRNQQDE) form a disordered region. The S5 DRBM domain maps to 45-108 (FIERVVTINR…EEARKNFFRV (64 aa)).

Belongs to the universal ribosomal protein uS5 family. Part of the 30S ribosomal subunit. Contacts proteins S4 and S8.

With S4 and S12 plays an important role in translational accuracy. Its function is as follows. Located at the back of the 30S subunit body where it stabilizes the conformation of the head with respect to the body. This is Small ribosomal subunit protein uS5 from Corynebacterium jeikeium (strain K411).